The primary structure comprises 213 residues: Peptidyl-tRNA hydrolase (213 aa).

TRNA is bound at residue tyrosine 26. The active-site Proton acceptor is the histidine 31. Positions 78, 80, and 126 each coordinate tRNA.

It belongs to the PTH family. Monomer.

The protein localises to the cytoplasm. The enzyme catalyses an N-acyl-L-alpha-aminoacyl-tRNA + H2O = an N-acyl-L-amino acid + a tRNA + H(+). Functionally, hydrolyzes ribosome-free peptidyl-tRNAs (with 1 or more amino acids incorporated), which drop off the ribosome during protein synthesis, or as a result of ribosome stalling. Its function is as follows. Catalyzes the release of premature peptidyl moieties from peptidyl-tRNA molecules trapped in stalled 50S ribosomal subunits, and thus maintains levels of free tRNAs and 50S ribosomes. This Trichormus variabilis (strain ATCC 29413 / PCC 7937) (Anabaena variabilis) protein is Peptidyl-tRNA hydrolase.